Consider the following 184-residue polypeptide: uncharacterized protein (184 aa).

The region spanning 72-135 (RKSQAILLIG…GIALGSAVKV (64 aa)) is the 4Fe-4S domain. Residues Cys-92, Cys-95, Cys-100, and Cys-118 each contribute to the [4Fe-4S] cluster site.

It depends on [4Fe-4S] cluster as a cofactor.

This is an uncharacterized protein from Archaeoglobus fulgidus (strain ATCC 49558 / DSM 4304 / JCM 9628 / NBRC 100126 / VC-16).